Reading from the N-terminus, the 339-residue chain is D-erythrose-4-phosphate dehydrogenase (339 aa).

11–12 serves as a coordination point for NAD(+); sequence RI. Residues 158-160, R204, 217-218, and R240 contribute to the substrate site; these read SCT and TK. C159 serves as the catalytic Nucleophile. N322 contributes to the NAD(+) binding site.

The protein belongs to the glyceraldehyde-3-phosphate dehydrogenase family. Epd subfamily. Homotetramer.

Its subcellular location is the cytoplasm. It carries out the reaction D-erythrose 4-phosphate + NAD(+) + H2O = 4-phospho-D-erythronate + NADH + 2 H(+). The protein operates within cofactor biosynthesis; pyridoxine 5'-phosphate biosynthesis; pyridoxine 5'-phosphate from D-erythrose 4-phosphate: step 1/5. Functionally, catalyzes the NAD-dependent conversion of D-erythrose 4-phosphate to 4-phosphoerythronate. The polypeptide is D-erythrose-4-phosphate dehydrogenase (Aliivibrio fischeri (strain MJ11) (Vibrio fischeri)).